A 406-amino-acid chain; its full sequence is Cysteine desulfurase (406 aa).

An N6-(pyridoxal phosphate)lysine modification is found at K226. Residue C364 is the Cysteine persulfide intermediate of the active site.

It belongs to the class-V pyridoxal-phosphate-dependent aminotransferase family. Csd subfamily. Homodimer. Interacts with SufE and the SufBCD complex composed of SufB, SufC and SufD. The interaction with SufE is required to mediate the direct transfer of the sulfur atom from the S-sulfanylcysteine. The cofactor is pyridoxal 5'-phosphate.

It is found in the cytoplasm. It carries out the reaction (sulfur carrier)-H + L-cysteine = (sulfur carrier)-SH + L-alanine. The enzyme catalyses L-selenocysteine + AH2 = hydrogenselenide + L-alanine + A + H(+). It participates in cofactor biosynthesis; iron-sulfur cluster biosynthesis. Its function is as follows. Cysteine desulfurases mobilize the sulfur from L-cysteine to yield L-alanine, an essential step in sulfur metabolism for biosynthesis of a variety of sulfur-containing biomolecules. Component of the suf operon, which is activated and required under specific conditions such as oxidative stress and iron limitation. Acts as a potent selenocysteine lyase in vitro, that mobilizes selenium from L-selenocysteine. Selenocysteine lyase activity is however unsure in vivo. This chain is Cysteine desulfurase, found in Enterobacter sp. (strain 638).